The chain runs to 82 residues: Large ribosomal subunit protein uL23 (82 aa).

This sequence belongs to the universal ribosomal protein uL23 family. Part of the 50S ribosomal subunit. Contacts protein L29.

Binds to 23S rRNA. One of the proteins that surrounds the polypeptide exit tunnel on the outside of the ribosome. The polypeptide is Large ribosomal subunit protein uL23 (Methanospirillum hungatei JF-1 (strain ATCC 27890 / DSM 864 / NBRC 100397 / JF-1)).